The chain runs to 198 residues: Uracil phosphoribosyltransferase homolog (198 aa).

The protein belongs to the UPRTase family.

The protein resides in the plastid. Its subcellular location is the chloroplast. The chain is Uracil phosphoribosyltransferase homolog from Pyropia yezoensis (Susabi-nori).